Here is a 368-residue protein sequence, read N- to C-terminus: 3-dehydroquinate synthase (368 aa).

NAD(+)-binding positions include 80–85, 114–118, 138–139, K151, and K160; these read DAESAK, GAATD, and TT. 3 residues coordinate Zn(2+): E193, H255, and H271.

The protein belongs to the sugar phosphate cyclases superfamily. Dehydroquinate synthase family. Requires Co(2+) as cofactor. Zn(2+) is required as a cofactor. It depends on NAD(+) as a cofactor.

Its subcellular location is the cytoplasm. The enzyme catalyses 7-phospho-2-dehydro-3-deoxy-D-arabino-heptonate = 3-dehydroquinate + phosphate. It participates in metabolic intermediate biosynthesis; chorismate biosynthesis; chorismate from D-erythrose 4-phosphate and phosphoenolpyruvate: step 2/7. In terms of biological role, catalyzes the conversion of 3-deoxy-D-arabino-heptulosonate 7-phosphate (DAHP) to dehydroquinate (DHQ). This chain is 3-dehydroquinate synthase, found in Corynebacterium jeikeium (strain K411).